Reading from the N-terminus, the 465-residue chain is ATP synthase subunit beta (465 aa).

Residue 148 to 155 (GGAGVGKT) participates in ATP binding.

Belongs to the ATPase alpha/beta chains family. In terms of assembly, F-type ATPases have 2 components, CF(1) - the catalytic core - and CF(0) - the membrane proton channel. CF(1) has five subunits: alpha(3), beta(3), gamma(1), delta(1), epsilon(1). CF(0) has three main subunits: a(1), b(2) and c(9-12). The alpha and beta chains form an alternating ring which encloses part of the gamma chain. CF(1) is attached to CF(0) by a central stalk formed by the gamma and epsilon chains, while a peripheral stalk is formed by the delta and b chains.

The protein resides in the cell inner membrane. The enzyme catalyses ATP + H2O + 4 H(+)(in) = ADP + phosphate + 5 H(+)(out). Its function is as follows. Produces ATP from ADP in the presence of a proton gradient across the membrane. The catalytic sites are hosted primarily by the beta subunits. The polypeptide is ATP synthase subunit beta (Neisseria meningitidis serogroup A / serotype 4A (strain DSM 15465 / Z2491)).